Reading from the N-terminus, the 336-residue chain is Holliday junction branch migration complex subunit RuvB (336 aa).

The interval 4 to 184 (ADRLISAGAT…FGIVQRLEFY (181 aa)) is large ATPase domain (RuvB-L). ATP-binding positions include isoleucine 23, arginine 24, glycine 65, lysine 68, threonine 69, threonine 70, 131–133 (EDY), arginine 174, tyrosine 184, and arginine 221. Threonine 69 lines the Mg(2+) pocket. The tract at residues 185–255 (QVPDLQHIVG…IAAQALDMLN (71 aa)) is small ATPAse domain (RuvB-S). The head domain (RuvB-H) stretch occupies residues 258–336 (AEGFDYMDRK…HFGITPPEMP (79 aa)). DNA-binding residues include arginine 294, arginine 313, and arginine 318.

It belongs to the RuvB family. In terms of assembly, homohexamer. Forms an RuvA(8)-RuvB(12)-Holliday junction (HJ) complex. HJ DNA is sandwiched between 2 RuvA tetramers; dsDNA enters through RuvA and exits via RuvB. An RuvB hexamer assembles on each DNA strand where it exits the tetramer. Each RuvB hexamer is contacted by two RuvA subunits (via domain III) on 2 adjacent RuvB subunits; this complex drives branch migration. In the full resolvosome a probable DNA-RuvA(4)-RuvB(12)-RuvC(2) complex forms which resolves the HJ.

It localises to the cytoplasm. The enzyme catalyses ATP + H2O = ADP + phosphate + H(+). Its function is as follows. The RuvA-RuvB-RuvC complex processes Holliday junction (HJ) DNA during genetic recombination and DNA repair, while the RuvA-RuvB complex plays an important role in the rescue of blocked DNA replication forks via replication fork reversal (RFR). RuvA specifically binds to HJ cruciform DNA, conferring on it an open structure. The RuvB hexamer acts as an ATP-dependent pump, pulling dsDNA into and through the RuvAB complex. RuvB forms 2 homohexamers on either side of HJ DNA bound by 1 or 2 RuvA tetramers; 4 subunits per hexamer contact DNA at a time. Coordinated motions by a converter formed by DNA-disengaged RuvB subunits stimulates ATP hydrolysis and nucleotide exchange. Immobilization of the converter enables RuvB to convert the ATP-contained energy into a lever motion, pulling 2 nucleotides of DNA out of the RuvA tetramer per ATP hydrolyzed, thus driving DNA branch migration. The RuvB motors rotate together with the DNA substrate, which together with the progressing nucleotide cycle form the mechanistic basis for DNA recombination by continuous HJ branch migration. Branch migration allows RuvC to scan DNA until it finds its consensus sequence, where it cleaves and resolves cruciform DNA. The chain is Holliday junction branch migration complex subunit RuvB from Salmonella arizonae (strain ATCC BAA-731 / CDC346-86 / RSK2980).